The chain runs to 274 residues: Dermonecrotic toxin SdSicTox-betaIIB1bv (274 aa).

His-5 is a catalytic residue. Positions 25 and 27 each coordinate Mg(2+). His-41 functions as the Nucleophile in the catalytic mechanism. Cystine bridges form between Cys-45/Cys-51 and Cys-47/Cys-190. Asp-85 contributes to the Mg(2+) binding site.

It belongs to the arthropod phospholipase D family. Class II subfamily. The cofactor is Mg(2+). As to expression, expressed by the venom gland.

The protein resides in the secreted. It catalyses the reaction an N-(acyl)-sphingosylphosphocholine = an N-(acyl)-sphingosyl-1,3-cyclic phosphate + choline. The enzyme catalyses an N-(acyl)-sphingosylphosphoethanolamine = an N-(acyl)-sphingosyl-1,3-cyclic phosphate + ethanolamine. It carries out the reaction a 1-acyl-sn-glycero-3-phosphocholine = a 1-acyl-sn-glycero-2,3-cyclic phosphate + choline. The catalysed reaction is a 1-acyl-sn-glycero-3-phosphoethanolamine = a 1-acyl-sn-glycero-2,3-cyclic phosphate + ethanolamine. Its function is as follows. Dermonecrotic toxins cleave the phosphodiester linkage between the phosphate and headgroup of certain phospholipids (sphingolipid and lysolipid substrates), forming an alcohol (often choline) and a cyclic phosphate. This toxin acts on sphingomyelin (SM). It may also act on ceramide phosphoethanolamine (CPE), lysophosphatidylcholine (LPC) and lysophosphatidylethanolamine (LPE), but not on lysophosphatidylserine (LPS), and lysophosphatidylglycerol (LPG). It acts by transphosphatidylation, releasing exclusively cyclic phosphate products as second products. Induces dermonecrosis, hemolysis, increased vascular permeability, edema, inflammatory response, and platelet aggregation. In Sicarius cf. damarensis (strain GJB-2008) (Six-eyed sand spider), this protein is Dermonecrotic toxin SdSicTox-betaIIB1bv.